Here is a 294-residue protein sequence, read N- to C-terminus: KGYQYLPVVLKVIAMTTIKNVSEHQAGICVTMSVKLPAILTRQLAQTSCPSLPDPMNRYGYLAPQYGGLRIRACPSGTIYSENQCRYKSNMNGNGGLRGSARKQFRQCSAEFKINFDDGFKDISKGGLAFDYSHISLRRGKGVFVGNSKLYIWGFQSRFLGKTFAIRMKVKIKRGAGKYRPEPIISNCGPNGDSSVEIVVHRGKVIFKAKTSDNPEAVFITEDYDDDKWTDLTYYYDGNHFGGSCNGRPFRQRTGGNLEIRDNPMTIGLCTGQNGFHGEIDELEIYTACIPKDM.

As to expression, component of the organic matrix of calcified shell layers like nacre and prisms.

The protein resides in the secreted. In Mytilus californianus (California mussel), this protein is Shell matrix protein.